Here is a 313-residue protein sequence, read N- to C-terminus: NF-kappa-B inhibitor delta (313 aa).

ANK repeat units follow at residues 48–83 (EGDTLLHLFAARGLRWAAYAAAEVLQVYRRLDIREH), 84–113 (KGKTPLLVAAAANQPLIVEDLLNLGAEPNA), 117–146 (QGRSVLHVAATYGLPGVLLAVLNSGVQVDL), 152–201 (EGLT…NHTS), 206–236 (SNKTVLHLAVQAANPTLVQLLLELPRGDLRT), and 243–276 (HGNTALHMAAALPPGPAQEAIVRHLLAAGADPTL).

Belongs to the NF-kappa-B inhibitor family. As to quaternary structure, interacts with NFKB1, RELA and RELB; in the nucleus.

It localises to the nucleus. Its function is as follows. Regulates the expression of IL-2, IL-6, and other cytokines through regulation on NF-kappa-B activity. Functions in the regulation of inflammatory responses. Involved in the induction of T helper 17 cells (Th17) differentiation upon recognition of antigen by T cell antigen receptor (TCR). May also regulate TCR-induced negative selection of thymocytes. In Homo sapiens (Human), this protein is NF-kappa-B inhibitor delta (NFKBID).